Consider the following 128-residue polypeptide: UPF0325 protein CKO_03204 (128 aa).

Belongs to the UPF0325 family.

The polypeptide is UPF0325 protein CKO_03204 (Citrobacter koseri (strain ATCC BAA-895 / CDC 4225-83 / SGSC4696)).